A 148-amino-acid polypeptide reads, in one-letter code: Insoluble matrix shell protein 1 (148 aa).

The disordered stretch occupies residues 105–128 (KSGRTEARNTDDSGDPIIDPRTAD).

Component of the acid-insoluble organic matrix of the calcified shell.

It localises to the secreted. This chain is Insoluble matrix shell protein 1, found in Ruditapes philippinarum (Japanese carpet shell).